The following is a 390-amino-acid chain: Magnesium-protoporphyrin IX monomethyl ester [oxidative] cyclase (390 aa).

The disordered stretch occupies residues 1-20 (MSQSTIESTNKKEINKGKAP).

The protein belongs to the AcsF family. Fe cation serves as cofactor.

The enzyme catalyses Mg-protoporphyrin IX 13-monomethyl ester + 3 NADPH + 3 O2 + 2 H(+) = 3,8-divinyl protochlorophyllide a + 3 NADP(+) + 5 H2O. The protein operates within porphyrin-containing compound metabolism; chlorophyll biosynthesis (light-independent). Functionally, catalyzes the formation of the isocyclic ring in chlorophyll biosynthesis. Mediates the cyclase reaction, which results in the formation of divinylprotochlorophyllide (Pchlide) characteristic of all chlorophylls from magnesium-protoporphyrin IX 13-monomethyl ester (MgPMME). In Prochlorococcus marinus (strain MIT 9301), this protein is Magnesium-protoporphyrin IX monomethyl ester [oxidative] cyclase.